A 34-amino-acid chain; its full sequence is Photosystem II reaction center protein M (34 aa).

Residues 5–25 form a helical membrane-spanning segment; sequence ILAFIAIVLFISVPTAFLLII.

The protein belongs to the PsbM family. PSII is composed of 1 copy each of membrane proteins PsbA, PsbB, PsbC, PsbD, PsbE, PsbF, PsbH, PsbI, PsbJ, PsbK, PsbL, PsbM, PsbT, PsbX, PsbY, PsbZ, Psb30/Ycf12, at least 3 peripheral proteins of the oxygen-evolving complex and a large number of cofactors. It forms dimeric complexes.

Its subcellular location is the plastid. It is found in the chloroplast thylakoid membrane. Its function is as follows. One of the components of the core complex of photosystem II (PSII). PSII is a light-driven water:plastoquinone oxidoreductase that uses light energy to abstract electrons from H(2)O, generating O(2) and a proton gradient subsequently used for ATP formation. It consists of a core antenna complex that captures photons, and an electron transfer chain that converts photonic excitation into a charge separation. This subunit is found at the monomer-monomer interface. The chain is Photosystem II reaction center protein M from Cycas taitungensis (Prince sago).